Reading from the N-terminus, the 234-residue chain is Sugar fermentation stimulation protein homolog (234 aa).

It belongs to the SfsA family.

This chain is Sugar fermentation stimulation protein homolog, found in Pectobacterium carotovorum subsp. carotovorum (strain PC1).